The primary structure comprises 328 residues: DNA-directed RNA polymerase subunit alpha (328 aa).

Positions Met1 to Ser231 are alpha N-terminal domain (alpha-NTD). Residues Met252–Gln328 form an alpha C-terminal domain (alpha-CTD) region.

This sequence belongs to the RNA polymerase alpha chain family. Homodimer. The RNAP catalytic core consists of 2 alpha, 1 beta, 1 beta' and 1 omega subunit. When a sigma factor is associated with the core the holoenzyme is formed, which can initiate transcription.

The catalysed reaction is RNA(n) + a ribonucleoside 5'-triphosphate = RNA(n+1) + diphosphate. DNA-dependent RNA polymerase catalyzes the transcription of DNA into RNA using the four ribonucleoside triphosphates as substrates. The protein is DNA-directed RNA polymerase subunit alpha of Chloroherpeton thalassium (strain ATCC 35110 / GB-78).